The following is a 1096-amino-acid chain: Mediator of replication checkpoint protein 1 (1096 aa).

Basic and acidic residues predominate over residues 68-85 (EGKKAPEQNHNNGKDRSE). The disordered stretch occupies residues 68-90 (EGKKAPEQNHNNGKDRSENSLPT). Ser-144 is subject to Phosphoserine. Disordered stretches follow at residues 166-200 (ALKTPLTTGRPGATQRIDSSGATSQTQPIKSIEPQ), 294-316 (IQSELASEDSKREKARNVEYKKP), and 336-365 (DDSSSNEDDDIKLENAHPKPVQNDDELHEN). Polar residues predominate over residues 181–200 (RIDSSGATSQTQPIKSIEPQ). The segment covering 294–315 (IQSELASEDSKREKARNVEYKK) has biased composition (basic and acidic residues). The span at 336–346 (DDSSSNEDDDI) shows a compositional bias: acidic residues. A phosphoserine mark is found at Ser-409, Ser-411, and Ser-434. Positions 488–542 (QKEVIETKGLKLEDMAKEKEIVENLLEQEILRNKRIRQKEKRREKLEENDFQLNA) form a coiled coil. The interval 527–620 (EKRREKLEEN…VEAKPKEKAD (94 aa)) is disordered. Low complexity predominate over residues 547–560 (SDSGSESSGFALSG). Basic residues predominate over residues 591 to 600 (KQKKSHHVKH). Phosphoserine is present on residues Ser-605 and Ser-607. Position 609 is a phosphothreonine (Thr-609). Residues 611–620 (VEAKPKEKAD) are compositionally biased toward basic and acidic residues. Residues 652–716 (DTQNIEEVMA…IKELKKRGVT (65 aa)) adopt a coiled-coil conformation. A disordered region spans residues 724 to 743 (EESEDEWHGIGGADGEGSDD). A phosphoserine mark is found at Ser-801 and Ser-807. Over residues 881-898 (DTQDNSINVGDNTGNNEQ) the composition is skewed to polar residues. The tract at residues 881–903 (DTQDNSINVGDNTGNNEQKPVDQ) is disordered. At Ser-911 the chain carries Phosphoserine. The segment at 1058–1096 (RKTEGSHRYHHDHHNKKMKMKTKTKSNKLFESGQDSFDN) is disordered. The span at 1065–1083 (RYHHDHHNKKMKMKTKTKS) shows a compositional bias: basic residues.

As to quaternary structure, interacts with CDC45 in S phase. Post-translationally, phosphorylated by MEC1 and RAD53.

Its subcellular location is the nucleus. Required for normal DNA replication. Phosphorylated in response to DNA replication stress. Phosphorylation allows it to mediate the activation of RAD53. The chain is Mediator of replication checkpoint protein 1 (MRC1) from Saccharomyces cerevisiae (strain ATCC 204508 / S288c) (Baker's yeast).